Reading from the N-terminus, the 421-residue chain is Granaticin polyketide putative beta-ketoacyl synthase 1 (421 aa).

A Ketosynthase family 3 (KS3) domain is found at 2-416 (TRRVVITGVG…GFQSAMVLHR (415 aa)). Catalysis depends on for beta-ketoacyl synthase activity residues Cys-169, His-309, and His-346.

Belongs to the thiolase-like superfamily. Beta-ketoacyl-ACP synthases family.

It functions in the pathway antibiotic biosynthesis; granaticin biosynthesis. This Streptomyces violaceoruber protein is Granaticin polyketide putative beta-ketoacyl synthase 1 (gra-orf1).